Consider the following 180-residue polypeptide: uncharacterized protein (180 aa).

An N-terminal signal peptide occupies residues Met-1–Ala-22. Cys-41 and Cys-81 are oxidised to a cystine.

Belongs to the fimbrial protein family.

It is found in the fimbrium. This is an uncharacterized protein from Escherichia coli O157:H7.